Consider the following 359-residue polypeptide: Protein HEXIM1 (359 aa).

The segment at 1–163 is disordered; sequence MAEPFLSEYQ…RRRPSKKKRH (163 aa). The segment covering 9–19 has biased composition (polar residues); that stretch reads YQHQPQTSNCT. 2 stretches are compositionally biased toward basic and acidic residues: residues 34–47 and 84–93; these read PGAE…DSRW and CLREGEKGQN. A phosphoserine mark is found at serine 97 and serine 98. The segment covering 148 to 163 has biased composition (basic residues); it reads LGKKKHRRRPSKKKRH. The tract at residues 150–177 is basic region; mediates nuclear localization and interaction with 7SK snRNA and NR3C1; the sequence is KKKHRRRPSKKKRHWKPYYKLTWEEKKK. The interaction with P-TEFb stretch occupies residues 202–205; that stretch reads PYNT. The autoinhibitory acidic region; in absence of 7SK snRNA interacts with the basic region preventing interaction with P-TEFb and modulating subcellular localization stretch occupies residues 210–250; it reads MDDHDQEEPDLKTGLYSKRAAAKSDDTSDDDFMEEGGEEDG. Residues 213–262 are disordered; the sequence is HDQEEPDLKTGLYSKRAAAKSDDTSDDDFMEEGGEEDGGSDGMGGDGSEF. Serine 233 is subject to Phosphoserine. Threonine 236 is subject to Phosphothreonine. Residues 236 to 251 show a composition bias toward acidic residues; sequence TSDDDFMEEGGEEDGG. Serine 237, serine 252, and serine 260 each carry phosphoserine. The stretch at 283–349 forms a coiled coil; it reads SKQELIKEYL…LTENELHRQQ (67 aa). Residues 286–314 are mediates interaction with CCNT1; the sequence is ELIKEYLELEKCLSRMEDENNRLRLESKR. Residues 310 to 355 form a required for inhibition of ESR1-dependent transcription region; sequence LESKRLGGDDARVRELELELDRLRAENLQLLTENELHRQQERAPLS.

It belongs to the HEXIM family. Homooligomer and heterooligomer with HEXIM2; probably dimeric. Core component of the 7SK RNP complex, at least composed of 7SK RNA, LARP7, MEPCE, HEXIM1 (or HEXIM2) and P-TEFb (composed of CDK9 and CCNT1/cyclin-T1). Interacts with the N-CoR complex through NCOR1. Interacts with ESR1 and NR3C1. May interact with NF-kappa-B through RELA. Interacts with CCNT2; mediates formation of a tripartite complex with KPNA2. Part of the HDP-RNP complex composed of at least HEXIM1, PRKDC, XRCC5, XRCC6, paraspeckle proteins (SFPQ, NONO, PSPC1, RBM14, and MATR3) and NEAT1 non-coding RNA. In terms of tissue distribution, ubiquitously expressed with higher expression in placenta. HEXIM1 and HEXIM2 are differentially expressed. Expressed in endocrine tissues.

The protein localises to the nucleus. It is found in the cytoplasm. In terms of biological role, transcriptional regulator which functions as a general RNA polymerase II transcription inhibitor. Core component of the 7SK RNP complex: in cooperation with 7SK snRNA sequesters P-TEFb in a large inactive 7SK snRNP complex preventing RNA polymerase II phosphorylation and subsequent transcriptional elongation. May also regulate NF-kappa-B, ESR1, NR3C1 and CIITA-dependent transcriptional activity. Plays a role in the regulation of DNA virus-mediated innate immune response by assembling into the HDP-RNP complex, a complex that serves as a platform for IRF3 phosphorylation and subsequent innate immune response activation through the cGAS-STING pathway. The sequence is that of Protein HEXIM1 (HEXIM1) from Homo sapiens (Human).